The chain runs to 448 residues: Probable glycine dehydrogenase (decarboxylating) subunit 1 (448 aa).

Belongs to the GcvP family. N-terminal subunit subfamily. In terms of assembly, the glycine cleavage system is composed of four proteins: P, T, L and H. In this organism, the P 'protein' is a heterodimer of two subunits.

The enzyme catalyses N(6)-[(R)-lipoyl]-L-lysyl-[glycine-cleavage complex H protein] + glycine + H(+) = N(6)-[(R)-S(8)-aminomethyldihydrolipoyl]-L-lysyl-[glycine-cleavage complex H protein] + CO2. Functionally, the glycine cleavage system catalyzes the degradation of glycine. The P protein binds the alpha-amino group of glycine through its pyridoxal phosphate cofactor; CO(2) is released and the remaining methylamine moiety is then transferred to the lipoamide cofactor of the H protein. This chain is Probable glycine dehydrogenase (decarboxylating) subunit 1, found in Geobacillus thermodenitrificans (strain NG80-2).